A 315-amino-acid chain; its full sequence is Cysteine proteinase 2 (315 aa).

The signal sequence occupies residues 1-13; sequence MFAFICLLAIASA. Residues 14 to 93 constitute a propeptide, activation peptide; it reads IDFNTWASKN…NGQVKYLNIQ (80 aa). Intrachain disulfides connect Cys115–Cys161 and Cys152–Cys193. Cys118 is an active-site residue. Catalysis depends on residues His259 and Asn279.

Belongs to the peptidase C1 family. Interacts with cysteine protease inhibitor ICP1. Interacts with cysteine protease inhibitor ICP2.

It is found in the cell membrane. Its subcellular location is the cytoplasmic vesicle. It localises to the phagosome. The protein resides in the secreted. It catalyses the reaction Hydrolysis of proteins, including basement membrane collagen and azocasein. Preferential cleavage: Arg-Arg-|-Xaa in small molecule substrates including Z-Arg-Arg-|-NHMec.. With respect to regulation, inhibited by cysteine protease inhibitors ICP1 and ICP2. Inhibited by leupeptin and such inhibitors of cysteine proteinases as L-transepoxysuccinyl-L-leucylamido-(4-guanidino)butane, peptidyldiazomethanes, iodoacetic acid and chicken cystatin. Its function is as follows. Cysteine protease which degrades matrix proteins such as collagen, laminin and fibronectin and thus is involved in the destruction of human tissue. Can abolish adhesion. May play an important role in pathogenicity. The chain is Cysteine proteinase 2 from Entamoeba histolytica (strain ATCC 30459 / HM-1:IMSS / ABRM).